The chain runs to 401 residues: S-adenosylmethionine synthase (401 aa).

136 to 141 provides a ligand contact to ATP; the sequence is GTGSSD. A disordered region spans residues 278–305; the sequence is GDDGSVGRGNRSNGLITPSRPMSMEATS.

It belongs to the AdoMet synthase 2 family. Mg(2+) is required as a cofactor.

The catalysed reaction is L-methionine + ATP + H2O = S-adenosyl-L-methionine + phosphate + diphosphate. Its pathway is amino-acid biosynthesis; S-adenosyl-L-methionine biosynthesis; S-adenosyl-L-methionine from L-methionine: step 1/1. Its function is as follows. Catalyzes the formation of S-adenosylmethionine from methionine and ATP. The chain is S-adenosylmethionine synthase from Methanococcoides burtonii (strain DSM 6242 / NBRC 107633 / OCM 468 / ACE-M).